Reading from the N-terminus, the 302-residue chain is uncharacterized protein (302 aa).

3 disordered regions span residues 15–34, 143–195, and 221–246; these read RHST…RFHK, GMPL…PSHL, and GSEA…RESV. The segment covering 172 to 189 has biased composition (basic and acidic residues); sequence HSDENKATGQGRENRDQP.

This is an uncharacterized protein from Homo sapiens (Human).